The primary structure comprises 289 residues: MDQAGIIRDLLIWLEGHLDQPLSLDNVAAKAGYSKWHLQRMFKDVTGHAIGAYIRARRLSKSAVALRLTARPILDIALQYRFDSQQTFTRAFKKQFSQTPALYRRSSEWSAFGIRPPLRLGEFTVPEHQFVTLEDTPLLGVTQSYSCSLEQISDFRHEMRVQFWHDFLGHSPTIPPVLYGLNETRPSMEKDDEQEVFYTTALPQEQADGYVQSAHPVLLQGGEYVMFTYEGLGTGVQDFILTVYGTCMPMLNLTRRKGQDIERYYPSEDTKTGDRPINLRCEFLIPIRR.

Residues 8–106 enclose the HTH araC/xylS-type domain; sequence RDLLIWLEGH…SQTPALYRRS (99 aa). 2 DNA-binding regions (H-T-H motif) span residues 25 to 46 and 73 to 96; these read DNVA…KDVT and ILDI…KKQF.

Functionally, transcriptional regulator. Represses transcription of genes belonging to the flagellar regulon, including flhD, flhB and fliC; probably thereby leading to repression of motility. Binds to regulatory regions of target genes, including the promoters of the flhDC operon and of P-type ATPase mgtA. Involved in post-transcriptional regulation of expression. Represses expression of the flhDC operon in a post-transcriptional manner. Binds to the right arm of the replication origin oriC of the chromosome. Rob binding may influence the formation of the nucleoprotein structure, required for oriC function in the initiation of replication. The chain is Transcriptional regulator Rob from Salmonella typhimurium (strain LT2 / SGSC1412 / ATCC 700720).